Here is a 629-residue protein sequence, read N- to C-terminus: Polyadenylate-binding protein 2 (629 aa).

The span at 1-12 shows a compositional bias: polar residues; sequence MAQVQLQGQTPN. Positions 1-25 are disordered; that stretch reads MAQVQLQGQTPNGSTAAVTSAPATS. Low complexity predominate over residues 13 to 25; that stretch reads GSTAAVTSAPATS. RRM domains are found at residues 36–114, 124–201, 215–292, and 318–395; these read TSLY…YSHR, GNIF…PFLR, TNVY…RAQK, and SNLY…IAQR. The interval 480–507 is disordered; sequence PQQQRPGGGRRPGGIQHSQQQNPMMQQQ. The segment covering 492 to 507 has biased composition (low complexity); that stretch reads GGIQHSQQQNPMMQQQ. Residues 539 to 616 enclose the PABC domain; the sequence is TIGALASNLS…AMDVLRSVAA (78 aa).

Belongs to the polyadenylate-binding protein type-1 family. Interacts with eIF-iso4G. Interacts with ERD15/CID1 and CID7. Interacts with Turnip mosaic virus (TuMV) VPg-Pro and RNA-dependent RNA polymerase (RdRp). As to expression, expressed in all organs (at the protein level) but under distinct spatial and temporal regulation within each organ.

It localises to the cytoplasm. The protein localises to the nucleus. In terms of biological role, binds the poly(A) tail of mRNA. Appears to be an important mediator of the multiple roles of the poly(A) tail in mRNA biogenesis, stability and translation. In the cytoplasm, affects both translation and mRNA decay. Stimulates translation by interaction with translation initiation factor eIF4G, a subunit of the cap-binding complex eIF4F, bringing the 5'- and 3'-ends of the mRNA in proximity. The formation of this circular mRNP structure appears to be critical for the synergistic effects of the cap and the poly(A) tail in facilitating translation initiation, recycling of ribosomes, and mRNA stability. During infection with potyvirus TuMV, acts as a potential integral component of the viral replicase complex that could play an important role in the regulation of potyviral RNA-dependent RNA polymerase (RdRp). Binds to uridylated mRNAs and determines the size of uridine extensions. Limits uridine extension by URT1, likely by binding to the oligo(A) tail and preventing URT1 access. This is Polyadenylate-binding protein 2 (PAB2) from Arabidopsis thaliana (Mouse-ear cress).